The following is a 327-amino-acid chain: Aldo-keto reductase family 1 member A1 (327 aa).

NADP(+) contacts are provided by residues 13 to 22 (GQKIPLIGLG), Thr-23, Trp-24, and Asp-47. Tyr-52 functions as the Proton donor in the catalytic mechanism. NADP(+)-binding residues include Ser-164, Asn-165, Ser-213, Leu-215, Ser-217, Lys-265, Ser-266, Val-267, Thr-268, Arg-271, Gln-274, and Asn-275.

The protein belongs to the aldo/keto reductase family.

Its subcellular location is the cytoplasm. It localises to the cytosol. The protein localises to the apical cell membrane. It catalyses the reaction a primary alcohol + NADP(+) = an aldehyde + NADPH + H(+). The catalysed reaction is S-nitroso-CoA + NADPH + H(+) = sulfinamide-CoA + NADP(+). It carries out the reaction S-nitrosoglutathione + NADPH + H(+) = S-(hydroxysulfenamide)glutathione + NADP(+). Functionally, catalyzes the NADPH-dependent reduction of a wide variety of carbonyl-containing compounds to their corresponding alcohols. Displays enzymatic activity towards endogenous metabolites such as aromatic and aliphatic aldehydes, ketones, monosaccharides and bile acids. Acts as an aldehyde-detoxification enzyme. Also acts as an inhibitor of protein S-nitrosylation by mediating degradation of S-nitroso-coenzyme A (S-nitroso-CoA), a cofactor required to S-nitrosylate proteins. Also acts as a S-nitroso-glutathione reductase by catalyzing the NADPH-dependent reduction of S-nitrosoglutathione. Displays no reductase activity towards retinoids. This chain is Aldo-keto reductase family 1 member A1 (akr1a1), found in Xenopus tropicalis (Western clawed frog).